The following is a 479-amino-acid chain: NADH-quinone oxidoreductase subunit N 2 (479 aa).

A run of 14 helical transmembrane segments spans residues 9 to 29 (WALA…LLIV), 40 to 60 (LLLW…LMLA), 75 to 95 (RFAV…FFLS), 110 to 130 (YVLL…IDLL), 131 to 151 (SIYV…GFLR), 164 to 184 (VILG…IYGL), 206 to 226 (LLLA…AVPF), 238 to 258 (PTTI…AVIL), 272 to 292 (WIIV…VALV), 299 to 319 (LLAY…VAGG), 326 to 346 (VMLY…AVIM), 371 to 391 (ALLM…AGFF), 404 to 424 (GFVA…YFYI), and 449 to 469 (ATLA…AWFL).

It belongs to the complex I subunit 2 family. As to quaternary structure, NDH-1 is composed of 14 different subunits. Subunits NuoA, H, J, K, L, M, N constitute the membrane sector of the complex.

Its subcellular location is the cell inner membrane. The catalysed reaction is a quinone + NADH + 5 H(+)(in) = a quinol + NAD(+) + 4 H(+)(out). Its function is as follows. NDH-1 shuttles electrons from NADH, via FMN and iron-sulfur (Fe-S) centers, to quinones in the respiratory chain. The immediate electron acceptor for the enzyme in this species is believed to be ubiquinone. Couples the redox reaction to proton translocation (for every two electrons transferred, four hydrogen ions are translocated across the cytoplasmic membrane), and thus conserves the redox energy in a proton gradient. This chain is NADH-quinone oxidoreductase subunit N 2, found in Rhizobium meliloti (strain 1021) (Ensifer meliloti).